A 1085-amino-acid polypeptide reads, in one-letter code: Ubiquitin carboxyl-terminal hydrolase 36 (1085 aa).

The segment covering 23 to 36 (GGNSSAAGSSADQA) has biased composition (low complexity). 2 disordered regions span residues 23 to 47 (GGNS…GSLQ) and 104 to 149 (KVVG…PKPK). The USP domain occupies 173–481 (TGMINVGNTC…NAYIMFYELD (309 aa)). Residue cysteine 182 is the Nucleophile of the active site. The Proton acceptor role is filled by histidine 440. Disordered regions lie at residues 489 to 730 (AANR…NNSK), 745 to 888 (KSAD…ELLK), 963 to 1030 (EQRQ…FYNQ), and 1043 to 1085 (KFNR…QQQS). Low complexity predominate over residues 503–518 (STTPVPATTVSSPSPT). Phosphoserine is present on residues serine 514 and serine 516. The segment covering 532-542 (GYSNGNAQKTA) has biased composition (polar residues). Residues 588–609 (NGNKSSSTSSNNSSSSNHKSIN) show a composition bias toward low complexity. Residues 642–651 (MTDDHTEKPK) show a composition bias toward basic and acidic residues. Phosphothreonine is present on residues threonine 660 and threonine 664. A phosphoserine mark is found at serine 674 and serine 676. The segment covering 705-730 (TNGHSKTNGSLTNGSASSSVHVNNSK) has biased composition (polar residues). A Phosphoserine modification is found at serine 749. The segment covering 749 to 758 (SDDDDDEEES) has biased composition (acidic residues). The span at 768–778 (PQKQSQSQSKA) shows a compositional bias: low complexity. Residues 779–788 (PPSPKTPPSP) show a composition bias toward pro residues. Position 781 is a phosphoserine (serine 781). Threonine 784 carries the post-translational modification Phosphothreonine. Position 787 is a phosphoserine (serine 787). The span at 805-818 (EVDDIDDDDDEEEE) shows a compositional bias: acidic residues. Over residues 822 to 844 (KIQTPSKTHRNPFSSSKPSTDSP) the composition is skewed to polar residues. Threonine 825 is modified (phosphothreonine). Residue serine 843 is modified to Phosphoserine. A Phosphothreonine modification is found at threonine 846. Polar residues predominate over residues 859-884 (PVKSHQQPRVGNGYQSEATSNGSTIN). Low complexity-rich tracts occupy residues 987 to 998 (SGSAKGNNASNS) and 1056 to 1066 (QQQRALQRHLA).

It belongs to the peptidase C19 family. Interacts with atms/PAF1, but not with CycT.

Its subcellular location is the nucleus. It is found in the nucleolus. The enzyme catalyses Thiol-dependent hydrolysis of ester, thioester, amide, peptide and isopeptide bonds formed by the C-terminal Gly of ubiquitin (a 76-residue protein attached to proteins as an intracellular targeting signal).. Functionally, required for maintaining multiple types of adult stem cells, including male and female germline, epithelial follicle cell and intestinal stem cells. May function as a transcriptional repressor by continually deubiquiting histone H2B at the promoters of genes critical for cellular differentiation, thereby preventing histone H3 'Lys-4' trimethylation (H3K4). Controls selective autophagy activation by ubiquitinated proteins. This is Ubiquitin carboxyl-terminal hydrolase 36 (Usp36) from Drosophila erecta (Fruit fly).